The chain runs to 202 residues: Probable WRKY transcription factor 59 (202 aa).

The WRKY DNA-binding region spans 103-168 (DEKVALDDGY…YEGRHNHPSP (66 aa)).

This sequence belongs to the WRKY group II-c family.

Its subcellular location is the nucleus. Functionally, transcription factor. Interacts specifically with the W box (5'-(T)TGAC[CT]-3'), a frequently occurring elicitor-responsive cis-acting element. The chain is Probable WRKY transcription factor 59 (WRKY59) from Arabidopsis thaliana (Mouse-ear cress).